A 380-amino-acid polypeptide reads, in one-letter code: Erythronate-4-phosphate dehydrogenase (380 aa).

Ser45 and Thr66 together coordinate substrate. Residues Asp146, Thr174, 205–207 (ASR), and Asp231 each bind NAD(+). Arg207 is a catalytic residue. The active site involves Glu236. His253 serves as the catalytic Proton donor. An NAD(+)-binding site is contributed by Gly256. Residue Tyr257 participates in substrate binding.

The protein belongs to the D-isomer specific 2-hydroxyacid dehydrogenase family. PdxB subfamily. As to quaternary structure, homodimer.

The protein localises to the cytoplasm. It catalyses the reaction 4-phospho-D-erythronate + NAD(+) = (R)-3-hydroxy-2-oxo-4-phosphooxybutanoate + NADH + H(+). The protein operates within cofactor biosynthesis; pyridoxine 5'-phosphate biosynthesis; pyridoxine 5'-phosphate from D-erythrose 4-phosphate: step 2/5. Catalyzes the oxidation of erythronate-4-phosphate to 3-hydroxy-2-oxo-4-phosphonooxybutanoate. The protein is Erythronate-4-phosphate dehydrogenase of Pseudomonas putida (strain W619).